The sequence spans 202 residues: Odorant-binding protein 59a (202 aa).

The signal sequence occupies residues 1–20; it reads MKQLIFLLICLSCGTCSIYA. The span at 43-53 shows a compositional bias: basic and acidic residues; sequence HRQDEDEDRGR. The segment at 43–105 is disordered; that stretch reads HRQDEDEDRG…QSDGRNHTSN (63 aa). A compositionally biased stretch (gly residues) spans 54–65; sequence GGQGRQGNGYEY.

This sequence belongs to the PBP/GOBP family. As to expression, expressed in non-neuronal cells in hygrosensitive sensilla in the second chamber of the sacculus of the antenna third segment (at protein level).

It is found in the secreted. Functionally, odorant-binding protein required for hygrotaxis behavior in humidity-detecting sensilla. The sequence is that of Odorant-binding protein 59a from Drosophila melanogaster (Fruit fly).